Consider the following 408-residue polypeptide: Multifunctional CCA protein (408 aa).

ATP is bound by residues G8 and R11. Positions 8 and 11 each coordinate CTP. Residues D21 and D23 each coordinate Mg(2+). Residues R91, R137, and R140 each contribute to the ATP site. CTP is bound by residues R91, R137, and R140. An HD domain is found at 228–329 (TGVHVLSVLE…LELLQSFDVY (102 aa)).

Belongs to the tRNA nucleotidyltransferase/poly(A) polymerase family. Bacterial CCA-adding enzyme type 1 subfamily. Monomer. Can also form homodimers and oligomers. Mg(2+) serves as cofactor. It depends on Ni(2+) as a cofactor.

The catalysed reaction is a tRNA precursor + 2 CTP + ATP = a tRNA with a 3' CCA end + 3 diphosphate. It catalyses the reaction a tRNA with a 3' CCA end + 2 CTP + ATP = a tRNA with a 3' CCACCA end + 3 diphosphate. Its function is as follows. Catalyzes the addition and repair of the essential 3'-terminal CCA sequence in tRNAs without using a nucleic acid template. Adds these three nucleotides in the order of C, C, and A to the tRNA nucleotide-73, using CTP and ATP as substrates and producing inorganic pyrophosphate. tRNA 3'-terminal CCA addition is required both for tRNA processing and repair. Also involved in tRNA surveillance by mediating tandem CCA addition to generate a CCACCA at the 3' terminus of unstable tRNAs. While stable tRNAs receive only 3'-terminal CCA, unstable tRNAs are marked with CCACCA and rapidly degraded. The sequence is that of Multifunctional CCA protein from Pseudomonas syringae pv. syringae (strain B728a).